The following is a 339-amino-acid chain: Methylthioribose-1-phosphate isomerase (339 aa).

Substrate-binding positions include 50–52 (RGA), arginine 84, and glutamine 186. Aspartate 227 acts as the Proton donor in catalysis. 237–238 (NK) provides a ligand contact to substrate.

The protein belongs to the eIF-2B alpha/beta/delta subunits family. MtnA subfamily.

The catalysed reaction is 5-(methylsulfanyl)-alpha-D-ribose 1-phosphate = 5-(methylsulfanyl)-D-ribulose 1-phosphate. Its pathway is amino-acid biosynthesis; L-methionine biosynthesis via salvage pathway; L-methionine from S-methyl-5-thio-alpha-D-ribose 1-phosphate: step 1/6. In terms of biological role, catalyzes the interconversion of methylthioribose-1-phosphate (MTR-1-P) into methylthioribulose-1-phosphate (MTRu-1-P). The sequence is that of Methylthioribose-1-phosphate isomerase from Sulfurihydrogenibium sp. (strain YO3AOP1).